The sequence spans 554 residues: Glucose-6-phosphate isomerase (554 aa).

Glu-359 (proton donor) is an active-site residue. Residues His-390 and Lys-518 contribute to the active site.

The protein belongs to the GPI family.

The protein localises to the cytoplasm. The catalysed reaction is alpha-D-glucose 6-phosphate = beta-D-fructose 6-phosphate. Its pathway is carbohydrate biosynthesis; gluconeogenesis. It functions in the pathway carbohydrate degradation; glycolysis; D-glyceraldehyde 3-phosphate and glycerone phosphate from D-glucose: step 2/4. Catalyzes the reversible isomerization of glucose-6-phosphate to fructose-6-phosphate. This is Glucose-6-phosphate isomerase from Pseudomonas fluorescens (strain Pf0-1).